A 448-amino-acid polypeptide reads, in one-letter code: MKVRIRGIFATALTKLALDWGFSIVQPTGKIVERFDLPVDNSPPDVTVIDHESKSGVVVLGKCGAVEAFVERLREAVDPVVVKADLGVHDVFVGKVVGEGRVEGPGGIVLRVPPRFAPTVGSVGVFTVVRPPLGPVEGVAVPDIIVEGDYVELSTSPGVRFSRHIPEGERVRLRLLAETRLGWLGGLGVRFKSSARFAEDEAVVREAEALYRELVELAKGGEAGAVLRRGRCLALALFDKAAKERLDEVRRSVVPTARGHHALRAQGLGKCLDLLDYLGVEAYERAAEFLARGAVEIWHIKPWGEMVKMRGEAVGVFGDWLVVKRPLRPGGVLDGIGVKIERGFYALTCVPRRGNYVVHTYYTPEGRAVGTYINVNSEPEWGRRIIYIDLLVDVAYVGGEAKVLDLEEYRRYEDVFPARLRPPSGVLSPPVACGERGIIEAPPQSASS.

This sequence belongs to the FAU-1 family.

Probable RNase involved in rRNA stability through maturation and/or degradation of precursor rRNAs. Binds to RNA in loop regions with AU-rich sequences. This is Probable ribonuclease FAU-1 from Pyrobaculum calidifontis (strain DSM 21063 / JCM 11548 / VA1).